A 283-amino-acid chain; its full sequence is MRDRVYRTEAIIIRRSDAGEADRLVTILTPLGRQRVVARGARKLHSRLAGHIELFTHTMLMLAIGRNLHIVTQSSPLDRFERLRTDLERIGAAYYAAELVDRLVEEEAENKRAFSILLGTLRALNAGAAIDLTLRAYELHLLDALGYRPQLYECAACGAVLTEATNRFSPVTGGALCPDCAGVDRLALPMSLAAFKLLRYLQSQPLEISGELRISPATRAETESLLRAYLRHILERDPRSLAFLDDVRQMLRTSSPASVGSSATRYFAQGDTDENDRDPPGAR.

A compositionally biased stretch (polar residues) spans 254-264 (SSPASVGSSAT). The segment at 254–283 (SSPASVGSSATRYFAQGDTDENDRDPPGAR) is disordered.

The protein belongs to the RecO family.

Its function is as follows. Involved in DNA repair and RecF pathway recombination. The polypeptide is DNA repair protein RecO (Roseiflexus sp. (strain RS-1)).